A 190-amino-acid chain; its full sequence is Peptidyl-tRNA hydrolase (190 aa).

Position 14 (tyrosine 14) interacts with tRNA. The active-site Proton acceptor is the histidine 19. TRNA-binding residues include tyrosine 64, asparagine 66, and asparagine 112.

The protein belongs to the PTH family. As to quaternary structure, monomer.

It is found in the cytoplasm. The enzyme catalyses an N-acyl-L-alpha-aminoacyl-tRNA + H2O = an N-acyl-L-amino acid + a tRNA + H(+). In terms of biological role, hydrolyzes ribosome-free peptidyl-tRNAs (with 1 or more amino acids incorporated), which drop off the ribosome during protein synthesis, or as a result of ribosome stalling. Its function is as follows. Catalyzes the release of premature peptidyl moieties from peptidyl-tRNA molecules trapped in stalled 50S ribosomal subunits, and thus maintains levels of free tRNAs and 50S ribosomes. This chain is Peptidyl-tRNA hydrolase, found in Chlorobium phaeobacteroides (strain DSM 266 / SMG 266 / 2430).